Reading from the N-terminus, the 491-residue chain is Adenylosuccinate synthetase, chloroplastic (491 aa).

GTP is bound by residues 78 to 84 and 106 to 108; these read GDEGKGK and GHT. Asp79 serves as the catalytic Proton acceptor. Residues Asp79 and Gly106 each coordinate Mg(2+). Residues 79–82, 104–107, Thr196, Arg210, Gln290, Thr305, and Arg369 contribute to the IMP site; these read DEGK and NAGH. His107 serves as the catalytic Proton donor. 365-371 is a binding site for substrate; sequence TTTGRPR. GTP-binding positions include Arg371, 397–399, and 480–482; these read KLD and GIG.

The protein belongs to the adenylosuccinate synthetase family. In terms of assembly, homodimer. Mg(2+) serves as cofactor.

The protein localises to the plastid. It localises to the chloroplast. It carries out the reaction IMP + L-aspartate + GTP = N(6)-(1,2-dicarboxyethyl)-AMP + GDP + phosphate + 2 H(+). It participates in purine metabolism; AMP biosynthesis via de novo pathway; AMP from IMP: step 1/2. Plays an important role in the de novo pathway and in the salvage pathway of purine nucleotide biosynthesis. Catalyzes the first committed step in the biosynthesis of AMP from IMP. The chain is Adenylosuccinate synthetase, chloroplastic from Populus trichocarpa (Western balsam poplar).